We begin with the raw amino-acid sequence, 244 residues long: 7-cyano-7-deazaguanine synthase (244 aa).

14–24 contributes to the ATP binding site; that stretch reads FSGGQDSATCV. The Zn(2+) site is built by C202, C217, C220, and C223.

The protein belongs to the QueC family. It depends on Zn(2+) as a cofactor.

The catalysed reaction is 7-carboxy-7-deazaguanine + NH4(+) + ATP = 7-cyano-7-deazaguanine + ADP + phosphate + H2O + H(+). It participates in purine metabolism; 7-cyano-7-deazaguanine biosynthesis. Functionally, catalyzes the ATP-dependent conversion of 7-carboxy-7-deazaguanine (CDG) to 7-cyano-7-deazaguanine (preQ(0)). In Burkholderia cenocepacia (strain HI2424), this protein is 7-cyano-7-deazaguanine synthase.